A 187-amino-acid chain; its full sequence is UPF0301 protein YE3428 (187 aa).

This sequence belongs to the UPF0301 (AlgH) family.

The polypeptide is UPF0301 protein YE3428 (Yersinia enterocolitica serotype O:8 / biotype 1B (strain NCTC 13174 / 8081)).